The following is a 291-amino-acid chain: Protease HtpX (291 aa).

Helical transmembrane passes span 4 to 24 (IALF…VLNI) and 36 to 56 (LSGL…VSLL). Histidine 143 contributes to the Zn(2+) binding site. Glutamate 144 is a catalytic residue. Histidine 147 serves as a coordination point for Zn(2+). Transmembrane regions (helical) follow at residues 151–171 (GDMI…IFLS) and 199–219 (FIVS…LTMW). Residue glutamate 225 participates in Zn(2+) binding.

It belongs to the peptidase M48B family. It depends on Zn(2+) as a cofactor.

It localises to the cell inner membrane. The sequence is that of Protease HtpX from Aliivibrio salmonicida (strain LFI1238) (Vibrio salmonicida (strain LFI1238)).